The primary structure comprises 289 residues: tRNA(Ile)-lysidine synthase (289 aa).

11 to 16 (SGGPDS) provides a ligand contact to ATP.

Belongs to the tRNA(Ile)-lysidine synthase family.

It localises to the cytoplasm. It catalyses the reaction cytidine(34) in tRNA(Ile2) + L-lysine + ATP = lysidine(34) in tRNA(Ile2) + AMP + diphosphate + H(+). Functionally, ligates lysine onto the cytidine present at position 34 of the AUA codon-specific tRNA(Ile) that contains the anticodon CAU, in an ATP-dependent manner. Cytidine is converted to lysidine, thus changing the amino acid specificity of the tRNA from methionine to isoleucine. This chain is tRNA(Ile)-lysidine synthase, found in Mycoplasma pneumoniae (strain ATCC 29342 / M129 / Subtype 1) (Mycoplasmoides pneumoniae).